We begin with the raw amino-acid sequence, 151 residues long: High mobility group B protein 14 (151 aa).

Disordered stretches follow at residues 1–62 (MTKR…QTKM) and 132–151 (TKRM…DYSE). The segment covering 7-20 (KSGPLSPSCSGGSS) has biased composition (low complexity). Residues 35 to 56 (RSTRLRLQPLRKPKTSPKKKPV) show a composition bias toward basic residues. Residues 63-132 (PKKPATAFFF…EFHRAMTEYT (70 aa)) constitute a DNA-binding region (HMG box). A compositionally biased stretch (basic and acidic residues) spans 132–142 (TKRMESGAHDE). S150 carries the phosphoserine modification.

It belongs to the HMGB family.

It localises to the nucleus. This chain is High mobility group B protein 14 (HMGB14), found in Arabidopsis thaliana (Mouse-ear cress).